We begin with the raw amino-acid sequence, 1181 residues long: Cellulose synthase-like protein D5 (1181 aa).

Residues 1 to 17 (MVKSAASQSPSPVTITV) are compositionally biased toward polar residues. 2 disordered regions span residues 1–70 (MVKS…DEGR) and 202–229 (KEPYRDINDDPETEEEDEEDEAKPLPQM). The segment covering 48–59 (SSRATRRTSISS) has biased composition (low complexity). The segment covering 210-222 (DDPETEEEDEEDE) has biased composition (acidic residues). 2 helical membrane passes run 312–332 (AIISPYRLLIALRLVALGLFL) and 343–363 (AMWLWGMSTTCELWFALSWLL). Asp443 is a catalytic residue. Residues 497 to 542 (VRERRRVKREYDEFKVRINSLPEAIRRRSDAYNVHEELRAKKKQME) are a coiled coil. Asp884 is an active-site residue. Transmembrane regions (helical) follow at residues 966–986 (LFLIVYCILPAISLFSGQFIV), 991–1011 (ITFLIYLLSITLTLCMLSLLE), 1038–1058 (PAAVLQGLLKVIAGVDISFTL), 1082–1102 (FLMVPPLTIMMVNMIAIAVGL), 1116–1136 (LVGGVFFSFWVLCHLYPFAKG), and 1146–1166 (TIVFVWSGLLSIIVSLLWVYI).

It belongs to the glycosyltransferase 2 family. Plant cellulose synthase-like D subfamily. As to expression, expressed in vascular tissues.

The protein localises to the golgi apparatus membrane. Functionally, involved in stem and root growth. Possesses xylan and homogalacturonan synthase activity. The chain is Cellulose synthase-like protein D5 (CSLD5) from Arabidopsis thaliana (Mouse-ear cress).